The sequence spans 335 residues: Delta(7)-sterol 5(6)-desaturase erg3B (335 aa).

3 helical membrane passes run 74–94 (IWAF…ALVF), 113–133 (IGQA…LFLA), and 152–172 (LYTY…IYWI). A Fatty acid hydroxylase domain is found at 160 to 284 (LFIAFTDFAI…FITFWDRIGG (125 aa)). The short motif at 173–177 (HRGLH) is the Histidine box-1 element. Residues 186-190 (HKPHH) carry the Histidine box-2 motif. Residues 219-239 (PFLFPLQKAAYLGLFVFVTIW) form a helical membrane-spanning segment. N256 is a glycosylation site (N-linked (GlcNAc...) asparagine). The Histidine box-3 signature appears at 261 to 265 (HTIHH).

It belongs to the sterol desaturase family. Fe cation serves as cofactor.

It is found in the endoplasmic reticulum membrane. It participates in steroid metabolism; ergosterol biosynthesis. Functionally, delta(7)-sterol 5(6)-desaturase; part of the third module of ergosterol biosynthesis pathway that includes the late steps of the pathway. Erg3B catalyzes the introduction of a C-5 double bond in the B ring to produce 5-dehydroepisterol. The third module or late pathway involves the ergosterol synthesis itself through consecutive reactions that mainly occur in the endoplasmic reticulum (ER) membrane. Firstly, the squalene synthase erg9 catalyzes the condensation of 2 farnesyl pyrophosphate moieties to form squalene, which is the precursor of all steroids. Squalene synthase is crucial for balancing the incorporation of farnesyl diphosphate (FPP) into sterol and nonsterol isoprene synthesis. Secondly, squalene is converted into lanosterol by the consecutive action of the squalene epoxidase erg1 and the lanosterol synthase erg7. Then, the delta(24)-sterol C-methyltransferase erg6 methylates lanosterol at C-24 to produce eburicol. Eburicol is the substrate of the sterol 14-alpha demethylase encoded by cyp51A and cyp51B, to yield 4,4,24-trimethyl ergosta-8,14,24(28)-trienol. The C-14 reductase erg24 then reduces the C14=C15 double bond which leads to 4,4-dimethylfecosterol. A sequence of further demethylations at C-4, involving the C-4 demethylation complex containing the C-4 methylsterol oxidases erg25A or erg25B, the sterol-4-alpha-carboxylate 3-dehydrogenase erg26 and the 3-keto-steroid reductase erg27, leads to the production of fecosterol via 4-methylfecosterol. The C-8 sterol isomerase erg2 then catalyzes the reaction which results in unsaturation at C-7 in the B ring of sterols and thus converts fecosterol to episterol. The sterol-C5-desaturase erg3B then catalyzes the introduction of a C-5 double bond in the B ring to produce 5-dehydroepisterol. The 2 other sterol-C5-desaturases, erg3A and erg3C, seem to be less important in ergosterol biosynthesis. The C-22 sterol desaturase erg5 further converts 5-dehydroepisterol into ergosta-5,7,22,24(28)-tetraen-3beta-ol by forming the C-22(23) double bond in the sterol side chain. Finally, ergosta-5,7,22,24(28)-tetraen-3beta-ol is substrate of the C-24(28) sterol reductases erg4A and erg4B to produce ergosterol. Possible alternative sterol biosynthetic pathways might exist from fecosterol to ergosterol, depending on the activities of the erg3 isoforms. The protein is Delta(7)-sterol 5(6)-desaturase erg3B of Aspergillus fumigatus (strain ATCC MYA-4609 / CBS 101355 / FGSC A1100 / Af293) (Neosartorya fumigata).